Consider the following 110-residue polypeptide: Large ribosomal subunit protein uL22 (110 aa).

It belongs to the universal ribosomal protein uL22 family. Part of the 50S ribosomal subunit.

In terms of biological role, this protein binds specifically to 23S rRNA; its binding is stimulated by other ribosomal proteins, e.g. L4, L17, and L20. It is important during the early stages of 50S assembly. It makes multiple contacts with different domains of the 23S rRNA in the assembled 50S subunit and ribosome. Its function is as follows. The globular domain of the protein is located near the polypeptide exit tunnel on the outside of the subunit, while an extended beta-hairpin is found that lines the wall of the exit tunnel in the center of the 70S ribosome. This chain is Large ribosomal subunit protein uL22, found in Mycoplasmopsis pulmonis (strain UAB CTIP) (Mycoplasma pulmonis).